Reading from the N-terminus, the 216-residue chain is GTP cyclohydrolase-2 (216 aa).

A GTP-binding site is contributed by Arg-50–Glu-54. Residues Cys-55, Cys-66, and Cys-68 each coordinate Zn(2+). Residues Gln-71, Glu-93–Arg-95, and Thr-115 each bind GTP. The active-site Proton acceptor is Asp-127. Arg-129 serves as the catalytic Nucleophile. Residues Thr-150 and Lys-155 each coordinate GTP.

This sequence belongs to the GTP cyclohydrolase II family. The cofactor is Zn(2+).

The enzyme catalyses GTP + 4 H2O = 2,5-diamino-6-hydroxy-4-(5-phosphoribosylamino)-pyrimidine + formate + 2 phosphate + 3 H(+). It functions in the pathway cofactor biosynthesis; riboflavin biosynthesis; 5-amino-6-(D-ribitylamino)uracil from GTP: step 1/4. Its function is as follows. Catalyzes the conversion of GTP to 2,5-diamino-6-ribosylamino-4(3H)-pyrimidinone 5'-phosphate (DARP), formate and pyrophosphate. This chain is GTP cyclohydrolase-2, found in Histophilus somni (strain 129Pt) (Haemophilus somnus).